A 1024-amino-acid chain; its full sequence is Beta-galactosidase (1024 aa).

2 residues coordinate substrate: asparagine 103 and aspartate 202. Aspartate 202 contributes to the Na(+) binding site. Positions 417, 419, and 462 each coordinate Mg(2+). Residues glutamate 462 and 538–541 (EYAH) each bind substrate. Catalysis depends on glutamate 462, which acts as the Proton donor. Residue glutamate 538 is the Nucleophile of the active site. Asparagine 598 is a binding site for Mg(2+). Phenylalanine 602 and asparagine 605 together coordinate Na(+). Residues asparagine 605 and tryptophan 1000 each contribute to the substrate site.

This sequence belongs to the glycosyl hydrolase 2 family. Homotetramer. The cofactor is Mg(2+). Na(+) serves as cofactor.

The catalysed reaction is Hydrolysis of terminal non-reducing beta-D-galactose residues in beta-D-galactosides.. The polypeptide is Beta-galactosidase (Escherichia coli (strain UTI89 / UPEC)).